We begin with the raw amino-acid sequence, 297 residues long: L-threonate dehydrogenase (297 aa).

NAD(+)-binding positions include R3–C31 and T97. K173 is an active-site residue. K241 is an NAD(+) binding site.

This sequence belongs to the HIBADH-related family. L-threonate dehydrogenase subfamily.

It catalyses the reaction L-threonate + NAD(+) = 2-dehydro-L-erythronate + NADH + H(+). Its function is as follows. Catalyzes oxidation of L-threonate to 2-oxo-tetronate. Can use either NAD(+) or NADP(+) as cosubstrate, with a preference for NAD(+). The polypeptide is L-threonate dehydrogenase (Cupriavidus necator (strain ATCC 17699 / DSM 428 / KCTC 22496 / NCIMB 10442 / H16 / Stanier 337) (Ralstonia eutropha)).